Reading from the N-terminus, the 177-residue chain is Probasin (177 aa).

An N-terminal signal peptide occupies residues 1–17 (MRVILLLLTLDVLGVSS). C79 and C170 form a disulfide bridge.

This sequence belongs to the calycin superfamily. Lipocalin family. As to expression, prostatic epithelial cells.

It localises to the nucleus. The protein resides in the secreted. This Rattus norvegicus (Rat) protein is Probasin (Pbsn).